Here is a 185-residue protein sequence, read N- to C-terminus: Casparian strip membrane protein 2 (185 aa).

Residues 1 to 25 (MKAVSIEAGEGSKAKRVHGVNRGIS) are Cytoplasmic-facing. Residues 26–46 (VFDLVLRIVALVGTLASAVAM) form a helical membrane-spanning segment. Residues 47–73 (GTADQALSFSTQIVNFEAQYDDIDAFK) are Extracellular-facing. The helical transmembrane segment at 74 to 94 (FFVVSNSITCVYLALSIPISI) threads the bilayer. Over 95–106 (FHIIRSRAGKSR) the chain is Cytoplasmic. The chain crosses the membrane as a helical span at residues 107 to 127 (VLLIVLDAIMLVFLTSGASAA). Topologically, residues 128–160 (AAIVYLAHNGNTSTNWFSICQQYTDFCQRSAGS) are extracellular. Asn-138 is a glycosylation site (N-linked (GlcNAc...) asparagine). A helical membrane pass occupies residues 161–181 (LIGSFGAMALMVLLIILSSIA). Residues 182–185 (LSRR) lie on the Cytoplasmic side of the membrane.

It belongs to the Casparian strip membrane proteins (CASP) family. In terms of assembly, homodimer and heterodimers.

Its subcellular location is the cell membrane. Regulates membrane-cell wall junctions and localized cell wall deposition. Required for establishment of the Casparian strip membrane domain (CSD) and the subsequent formation of Casparian strips, a cell wall modification of the root endodermis that determines an apoplastic barrier between the intraorganismal apoplasm and the extraorganismal apoplasm and prevents lateral diffusion. The protein is Casparian strip membrane protein 2 of Solanum demissum (Wild potato).